A 1091-amino-acid chain; its full sequence is Error-prone DNA polymerase (1091 aa).

Residues 1–51 (MGWSNGPPSWAEMERVLNGKPRHAGVPAFDADGDVPRSRKRGAYQPPGRER) form a disordered region.

This sequence belongs to the DNA polymerase type-C family. DnaE2 subfamily.

The protein localises to the cytoplasm. The catalysed reaction is DNA(n) + a 2'-deoxyribonucleoside 5'-triphosphate = DNA(n+1) + diphosphate. Functionally, DNA polymerase involved in damage-induced mutagenesis and translesion synthesis (TLS). It is not the major replicative DNA polymerase. The polypeptide is Error-prone DNA polymerase (Mycobacterium bovis (strain ATCC BAA-935 / AF2122/97)).